Reading from the N-terminus, the 377-residue chain is MISRTPLFRTSIPIQRTLATNVKPRRKRTVFTDELNKGPSFEDFVSGKAKDMMEDPLELARKDPNAKLPKWLKVPIPKGKSFHNVKKDVRELKLSTVCEEAKCPNISECWGGKKSEATATIMLLGDTCTRGCRFCSVKTNRKPAAPDPNEPENTAEAIKRWGLGYVVLTTVDRDDLVDGGARHLAETVEKIKQKAPQILVEVLGGDFRGDLDMVEILANSGLDVYAHNLETVEDLTPHIRDRRATYRQSLAVLERAKKTKPSLVTKTSLMLGFGETDEQIMKTLKDLREIGCDVVTFGQYMRPTKRHMKVVEYVTPEKFDYWRDTALDMGFLYVASGPLVRSSYKAGEAFIENVLKKRRHNVGETPRLQSVAKPSVY.

Cys-98, Cys-103, Cys-109, Cys-128, Cys-132, Cys-135, and Ser-343 together coordinate [4Fe-4S] cluster. One can recognise a Radical SAM core domain in the interval 113–332 (KKSEATATIM…RDTALDMGFL (220 aa)).

It belongs to the radical SAM superfamily. Lipoyl synthase family. [4Fe-4S] cluster serves as cofactor.

It localises to the mitochondrion. The enzyme catalyses [[Fe-S] cluster scaffold protein carrying a second [4Fe-4S](2+) cluster] + N(6)-octanoyl-L-lysyl-[protein] + 2 oxidized [2Fe-2S]-[ferredoxin] + 2 S-adenosyl-L-methionine + 4 H(+) = [[Fe-S] cluster scaffold protein] + N(6)-[(R)-dihydrolipoyl]-L-lysyl-[protein] + 4 Fe(3+) + 2 hydrogen sulfide + 2 5'-deoxyadenosine + 2 L-methionine + 2 reduced [2Fe-2S]-[ferredoxin]. It participates in protein modification; protein lipoylation via endogenous pathway; protein N(6)-(lipoyl)lysine from octanoyl-[acyl-carrier-protein]: step 2/2. Its function is as follows. Catalyzes the radical-mediated insertion of two sulfur atoms into the C-6 and C-8 positions of the octanoyl moiety bound to the lipoyl domains of lipoate-dependent enzymes, thereby converting the octanoylated domains into lipoylated derivatives. This Candida tropicalis (strain ATCC MYA-3404 / T1) (Yeast) protein is Lipoyl synthase, mitochondrial.